Consider the following 299-residue polypeptide: Acetaldehyde dehydrogenase (299 aa).

Cys126 acts as the Acyl-thioester intermediate in catalysis. NAD(+)-binding positions include 157 to 165 (SAGPGTRQN) and Asn267.

This sequence belongs to the acetaldehyde dehydrogenase family.

It carries out the reaction acetaldehyde + NAD(+) + CoA = acetyl-CoA + NADH + H(+). The sequence is that of Acetaldehyde dehydrogenase (mhpF) from Carboxydothermus hydrogenoformans (strain ATCC BAA-161 / DSM 6008 / Z-2901).